A 901-amino-acid polypeptide reads, in one-letter code: DNA mismatch repair protein MutS (901 aa).

Positions 1-12 (MKYSASTSTPKS) are enriched in polar residues. The disordered stretch occupies residues 1–25 (MKYSASTSTPKSAQPKEEELENSLP). Position 679-686 (679-686 (GPNASGKS)) interacts with ATP.

This sequence belongs to the DNA mismatch repair MutS family.

In terms of biological role, this protein is involved in the repair of mismatches in DNA. It is possible that it carries out the mismatch recognition step. This protein has a weak ATPase activity. In Trichodesmium erythraeum (strain IMS101), this protein is DNA mismatch repair protein MutS.